A 542-amino-acid polypeptide reads, in one-letter code: Peptide chain release factor 3 (542 aa).

Residues E11 to R279 form the tr-type G domain. GTP contacts are provided by residues S20–T27, D88–H92, and N142–D145.

This sequence belongs to the TRAFAC class translation factor GTPase superfamily. Classic translation factor GTPase family. PrfC subfamily.

Its subcellular location is the cytoplasm. Increases the formation of ribosomal termination complexes and stimulates activities of RF-1 and RF-2. It binds guanine nucleotides and has strong preference for UGA stop codons. It may interact directly with the ribosome. The stimulation of RF-1 and RF-2 is significantly reduced by GTP and GDP, but not by GMP. This Nitrosococcus oceani (strain ATCC 19707 / BCRC 17464 / JCM 30415 / NCIMB 11848 / C-107) protein is Peptide chain release factor 3.